The chain runs to 433 residues: AP-2 complex subunit mu (433 aa).

In terms of domain architecture, MHD spans 168–432 (RNELFLDVLE…IGRSGIYETR (265 aa)). The a 1,2-diacyl-sn-glycero-3-phospho-(1D-myo-inositol-3,4,5-trisphosphate) site is built by Lys-339, Lys-343, and Lys-352.

The protein belongs to the adaptor complexes medium subunit family. Adaptor protein complex 2 (AP-2) is a heterotetramer composed of two large adaptins (alpha-type subunit and beta-type subunit), a medium adaptin (mu-type subunit) and a small adaptin (sigma-type subunit).

It localises to the cell membrane. The protein localises to the membrane. It is found in the coated pit. Functionally, component of the adaptor complexes which link clathrin to receptors in coated vesicles. Clathrin-associated protein complexes are believed to interact with the cytoplasmic tails of membrane proteins, leading to their selection and concentration. AP50 is a subunit of the plasma membrane adaptor. The complex binds polyphosphoinositide-containing lipids. The sequence is that of AP-2 complex subunit mu (AP2M1) from Gallus gallus (Chicken).